A 501-amino-acid polypeptide reads, in one-letter code: Dipeptide and tripeptide permease A (501 aa).

The Cytoplasmic portion of the chain corresponds to 1 to 34 (MSTANNNQPESISMNAFKQPKAFYLIFSIELWER). The helical transmembrane segment at 35 to 55 (FGYYGLQGIMAVYLVKMLGMS) threads the bilayer. Over 56-59 (EADS) the chain is Periplasmic. The helical transmembrane segment at 60–80 (ITLFSSFSALVYGFVAIGGWL) threads the bilayer. At 81-89 (GDKVLGAKR) the chain is on the cytoplasmic side. 2 helical membrane passes run 90 to 110 (VIVLGALTLAVGYSMIAYSGH) and 111 to 131 (EIFWVYLGMATIAVGNGLFKA). Over 132–153 (NPSSLLSTCYSKDDPRLDGAFT) the chain is Periplasmic. A helical transmembrane segment spans residues 154-174 (MYYMSINIGSFFSMLATPWLA). The Cytoplasmic segment spans residues 175-178 (AKYG). Residues 179–199 (WSVAFSLSVVGMLITLVNFWF) traverse the membrane as a helical segment. The Periplasmic portion of the chain corresponds to 200 to 220 (CRKWVKNQGSKPDFLPLQFKK). The helical transmembrane segment at 221–241 (LLMVLVGIIALITLSNWLLHN) threads the bilayer. The Cytoplasmic portion of the chain corresponds to 242–246 (QIIAR). The chain crosses the membrane as a helical span at residues 247–267 (WALALVSLGIIFIFTKETLFL). The Periplasmic segment spans residues 268–274 (QGIARRR). Residues 275–295 (MIVAFLLMLEAVIFFVLYSQM) form a helical membrane-spanning segment. Over 296–320 (PTSLNFFAIHNVEHSIFGIGFEPEQ) the chain is Cytoplasmic. A helical membrane pass occupies residues 321 to 341 (FQALNPFWIMLASPILAAIYN). Topologically, residues 342 to 352 (KMGDRLPMPHK) are periplasmic. Residues 353 to 373 (FAFGMMLCSAAFLVLPWGASF) traverse the membrane as a helical segment. Over 374–383 (ANEHGIVSVN) the chain is Cytoplasmic. Residues 384 to 404 (WLILSYALQSIGELMISGLGL) form a helical membrane-spanning segment. Residues 405-414 (AMVAQLVPQR) are Periplasmic-facing. A helical membrane pass occupies residues 415–435 (LMGFIMGSWFLTTAAAALIAG). Over 436–460 (KVAALTAVPSDAITDAHASLAIYSH) the chain is Cytoplasmic. The chain crosses the membrane as a helical span at residues 461-481 (VFMQIGIVTAIIAVLMMLTAP). Over 482 to 501 (KLYRMTLAPSDHNDVKIMTQ) the chain is Periplasmic.

This sequence belongs to the major facilitator superfamily. Proton-dependent oligopeptide transporter (POT/PTR) (TC 2.A.17) family. DtpA subfamily.

It is found in the cell inner membrane. In terms of biological role, proton-dependent permease that transports di- and tripeptides. The sequence is that of Dipeptide and tripeptide permease A from Yersinia pestis.